The chain runs to 545 residues: Tyrosine decarboxylase 2 (545 aa).

The span at 23–44 (GYTNGNGHTNGNGNYNGNGHVN) shows a compositional bias: gly residues. The disordered stretch occupies residues 23–45 (GYTNGNGHTNGNGNYNGNGHVNG). Residues His-245 and His-360 each coordinate L-tyrosine. Lys-361 carries the N6-(pyridoxal phosphate)lysine modification. Tyr-390 is a binding site for L-tyrosine.

The protein belongs to the group II decarboxylase family. As to quaternary structure, homotetramer. Pyridoxal 5'-phosphate is required as a cofactor. Expressed specifically in flowers.

The protein localises to the cytoplasm. The catalysed reaction is L-tyrosine + H(+) = tyramine + CO2. Converts tyrosine into tyramine, a precursor of isoquinoline alkaloids and various amides. The sequence is that of Tyrosine decarboxylase 2 from Arabidopsis thaliana (Mouse-ear cress).